The following is a 432-amino-acid chain: Adenosylhomocysteinase (432 aa).

Substrate is bound by residues Thr-57, Asp-131, and Glu-156. An NAD(+)-binding site is contributed by Thr-157–Thr-159. Ser-183 carries the phosphoserine modification. Substrate is bound by residues Lys-186 and Asp-190. The residue at position 186 (Lys-186) is an N6-(2-hydroxyisobutyryl)lysine. Tyr-193 bears the Phosphotyrosine mark. NAD(+)-binding positions include Gly-222–Gly-227, Glu-243, Asn-248, Ile-299–His-301, Asn-346, His-353, Lys-426, Lys-426–Tyr-430, and Tyr-430.

It belongs to the adenosylhomocysteinase family. As to quaternary structure, homotetramer. Interaction with AHCYL1. NAD(+) serves as cofactor.

Its subcellular location is the cytoplasm. It is found in the melanosome. The protein localises to the nucleus. It localises to the endoplasmic reticulum. The enzyme catalyses S-adenosyl-L-homocysteine + H2O = L-homocysteine + adenosine. It participates in amino-acid biosynthesis; L-homocysteine biosynthesis; L-homocysteine from S-adenosyl-L-homocysteine: step 1/1. Functionally, catalyzes the hydrolysis of S-adenosyl-L-homocysteine to form adenosine and homocysteine. Binds copper ions. The protein is Adenosylhomocysteinase (Ahcy) of Rattus norvegicus (Rat).